A 797-amino-acid polypeptide reads, in one-letter code: Adhesion G-protein coupled receptor G7 (797 aa).

The signal sequence occupies residues 1 to 26 (MASCRAWNLRVLVAVVCGLLTGIILG). The Extracellular segment spans residues 27-438 (LGIWRIVIRI…QYPKSLDILS (412 aa)). N-linked (GlcNAc...) asparagine glycosylation is found at N82, N159, N178, N191, N247, N261, N312, N316, and N387. The region spanning 275-428 (FSVQKGASSS…AVLMTFKKDY (154 aa)) is the GAIN-B domain. 2 disulfides stabilise this stretch: C383–C410 and C398–C412. Residues 383–428 (CVYWNLSAKDWDTYGCQKDKGTDGFLRCRCNHTTNFAVLMTFKKDY) are GPS. N-linked (GlcNAc...) asparagine glycosylation is present at N413. A helical membrane pass occupies residues 439–459 (NVGCALSVTGLALTVIFQIVT). The Cytoplasmic segment spans residues 460 to 468 (RKVRKTSVT). Residues 469–489 (WVLVNLCISMLIFNLLFVFGI) form a helical membrane-spanning segment. The Extracellular portion of the chain corresponds to 490–528 (ENSNKNLQTSDGDINNIDFDNNDIPRTDTINIPNPMCTA). Residues 529–549 (IAALLHYFLLVTFTWNALSAA) form a helical membrane-spanning segment. At 550-565 (QLYYLLIRTMKPLPRH) the chain is on the cytoplasmic side. Residues 566-586 (FILFISLIGWGVPAIVVAITV) form a helical membrane-spanning segment. Over 587 to 623 (GVIYSQNGNNPQWELDYRQEKICWLAIPEPNGVIKSP) the chain is Extracellular. The helical transmembrane segment at 624 to 644 (LLWSFIVPVTIILISNVVMFI) threads the bilayer. Topologically, residues 645-669 (TISIKVLWKNNQNLTSTKKVSSMKK) are cytoplasmic. The chain crosses the membrane as a helical span at residues 670–690 (IVSTLSVAVVFGITWILAYLM). Residues 691–698 (LVNDDSIR) lie on the Extracellular side of the membrane. Residues 699 to 719 (IVFSYIFCLFNTTQGLQIFIL) traverse the membrane as a helical segment. The Cytoplasmic segment spans residues 720–797 (YTVRTKVFQS…SESDNAKESI (78 aa)).

Belongs to the G-protein coupled receptor 2 family. Adhesion G-protein coupled receptor (ADGR) subfamily.

It localises to the membrane. Its function is as follows. Orphan receptor. The chain is Adhesion G-protein coupled receptor G7 (ADGRG7) from Homo sapiens (Human).